The following is a 471-amino-acid chain: Probable ribonuclease FAU-1 (471 aa).

Belongs to the FAU-1 family.

In terms of biological role, probable RNase involved in rRNA stability through maturation and/or degradation of precursor rRNAs. Binds to RNA in loop regions with AU-rich sequences. The sequence is that of Probable ribonuclease FAU-1 from Caldivirga maquilingensis (strain ATCC 700844 / DSM 13496 / JCM 10307 / IC-167).